The primary structure comprises 361 residues: Uroporphyrinogen decarboxylase (361 aa).

Substrate-binding positions include 27–31 (RQAGR), D77, Y154, T209, and H327.

This sequence belongs to the uroporphyrinogen decarboxylase family. In terms of assembly, homodimer.

The protein resides in the cytoplasm. It carries out the reaction uroporphyrinogen III + 4 H(+) = coproporphyrinogen III + 4 CO2. It participates in porphyrin-containing compound metabolism; protoporphyrin-IX biosynthesis; coproporphyrinogen-III from 5-aminolevulinate: step 4/4. Catalyzes the decarboxylation of four acetate groups of uroporphyrinogen-III to yield coproporphyrinogen-III. The sequence is that of Uroporphyrinogen decarboxylase from Coxiella burnetii (strain RSA 331 / Henzerling II).